The following is a 416-amino-acid chain: Serine hydroxymethyltransferase (416 aa).

(6S)-5,6,7,8-tetrahydrofolate is bound by residues Leu121 and 125 to 127 (GHL). Lys229 carries the post-translational modification N6-(pyridoxal phosphate)lysine. (6S)-5,6,7,8-tetrahydrofolate is bound at residue 354 to 356 (SPF).

It belongs to the SHMT family. In terms of assembly, homodimer. Requires pyridoxal 5'-phosphate as cofactor.

It is found in the cytoplasm. It catalyses the reaction (6R)-5,10-methylene-5,6,7,8-tetrahydrofolate + glycine + H2O = (6S)-5,6,7,8-tetrahydrofolate + L-serine. The protein operates within one-carbon metabolism; tetrahydrofolate interconversion. Its pathway is amino-acid biosynthesis; glycine biosynthesis; glycine from L-serine: step 1/1. Catalyzes the reversible interconversion of serine and glycine with tetrahydrofolate (THF) serving as the one-carbon carrier. This reaction serves as the major source of one-carbon groups required for the biosynthesis of purines, thymidylate, methionine, and other important biomolecules. Also exhibits THF-independent aldolase activity toward beta-hydroxyamino acids, producing glycine and aldehydes, via a retro-aldol mechanism. This chain is Serine hydroxymethyltransferase, found in Halorhodospira halophila (strain DSM 244 / SL1) (Ectothiorhodospira halophila (strain DSM 244 / SL1)).